The chain runs to 189 residues: Leucine repeat adapter protein 25 (189 aa).

Ser28 bears the Phosphoserine mark. The interval 54–82 (ELSRAARAPDGPRHAAGSANSGSAAGPRR) is disordered. Residues 68 to 79 (AAGSANSGSAAG) show a composition bias toward low complexity. An LRR repeat occupies 86 to 114 (LDSALAALRKEMVGLRQLDMSLLCQLWGL). The segment at 136-175 (SSLHSDSSYPPDAGLSDDEEPPDASLPPDPPPLTVPQTHN) is disordered. Over residues 159–169 (ASLPPDPPPLT) the composition is skewed to pro residues. A Phosphoserine modification is found at Ser188.

It belongs to the FAM89 family. In terms of assembly, interacts with SKI. Interacts (via LRR repeat) with CDC42BPA (via AGC-kinase C-terminal domain), CDC42BPB (via AGC-kinase C-terminal domain) and LIMK1 (via LIM zinc-binding domains). Forms a tripartite complex with CDC42BPA, CDC42BPB and LIMK1. (Microbial infection) Interacts with mouse mammary tumor virus (MMTV) envelope glycoprotein gp70. As to expression, widely expressed. Expressed in the early postnatal brain.

It is found in the cytoplasm. Its subcellular location is the cell projection. The protein localises to the lamellipodium. The protein resides in the cell surface. Negatively regulates TGF-beta-induced signaling; in cooperation with SKI prevents the translocation of SMAD2 from the nucleus to the cytoplasm in response to TGF-beta. Acts as an adapter that mediates the specific recognition of LIMK1 by CDC42BPA and CDC42BPB in the lamellipodia. LRAP25-mediated CDC42BPA/CDC42BPB targeting to LIMK1 and the lamellipodium results in LIMK1 activation and the subsequent phosphorylation of CFL1 which is important for lamellipodial F-actin regulation. Its function is as follows. (Microbial infection) May be a receptor for mouse mammary tumor virus (MMTV). This chain is Leucine repeat adapter protein 25, found in Mus musculus (Mouse).